The chain runs to 500 residues: Aspartyl/glutamyl-tRNA(Asn/Gln) amidotransferase subunit B (500 aa).

This sequence belongs to the GatB/GatE family. GatB subfamily. In terms of assembly, heterotrimer of A, B and C subunits.

The enzyme catalyses L-glutamyl-tRNA(Gln) + L-glutamine + ATP + H2O = L-glutaminyl-tRNA(Gln) + L-glutamate + ADP + phosphate + H(+). The catalysed reaction is L-aspartyl-tRNA(Asn) + L-glutamine + ATP + H2O = L-asparaginyl-tRNA(Asn) + L-glutamate + ADP + phosphate + 2 H(+). In terms of biological role, allows the formation of correctly charged Asn-tRNA(Asn) or Gln-tRNA(Gln) through the transamidation of misacylated Asp-tRNA(Asn) or Glu-tRNA(Gln) in organisms which lack either or both of asparaginyl-tRNA or glutaminyl-tRNA synthetases. The reaction takes place in the presence of glutamine and ATP through an activated phospho-Asp-tRNA(Asn) or phospho-Glu-tRNA(Gln). This is Aspartyl/glutamyl-tRNA(Asn/Gln) amidotransferase subunit B from Rhizobium etli (strain CIAT 652).